An 821-amino-acid polypeptide reads, in one-letter code: Putative outer membrane usher protein YqiG (821 aa).

Residues 1-20 (MSGNIGANPVIIIGCASAYA) form the signal peptide. A disulfide bridge connects residues C798 and C817.

Belongs to the fimbrial export usher family.

It is found in the cell outer membrane. Functionally, may be involved in H(2) production during fermentative growth. Involved in the export and assembly of a fimbrial subunit across the outer membrane. The chain is Putative outer membrane usher protein YqiG (yqiG) from Escherichia coli (strain K12).